We begin with the raw amino-acid sequence, 131 residues long: Protein ApaG (131 aa).

Residues 7-131 (PVKPYDLTVS…FLLAMPRTLH (125 aa)) enclose the ApaG domain.

In Bordetella bronchiseptica (strain ATCC BAA-588 / NCTC 13252 / RB50) (Alcaligenes bronchisepticus), this protein is Protein ApaG.